We begin with the raw amino-acid sequence, 205 residues long: Cytochrome c biogenesis ATP-binding export protein CcmA 2 (205 aa).

The ABC transporter domain occupies 2-205 (LEARDLYCER…LALTGGGAGL (204 aa)). 34-41 (GGNGAGKT) is an ATP binding site.

This sequence belongs to the ABC transporter superfamily. CcmA exporter (TC 3.A.1.107) family. As to quaternary structure, the complex is composed of two ATP-binding proteins (CcmA) and two transmembrane proteins (CcmB).

The protein resides in the cell inner membrane. The catalysed reaction is heme b(in) + ATP + H2O = heme b(out) + ADP + phosphate + H(+). Its function is as follows. Part of the ABC transporter complex CcmAB involved in the biogenesis of c-type cytochromes; once thought to export heme, this seems not to be the case, but its exact role is uncertain. Responsible for energy coupling to the transport system. This is Cytochrome c biogenesis ATP-binding export protein CcmA 2 from Salmonella typhimurium (strain LT2 / SGSC1412 / ATCC 700720).